The sequence spans 374 residues: Putative glutamate--cysteine ligase 2 (374 aa).

Belongs to the glutamate--cysteine ligase type 2 family. YbdK subfamily.

It carries out the reaction L-cysteine + L-glutamate + ATP = gamma-L-glutamyl-L-cysteine + ADP + phosphate + H(+). Its function is as follows. ATP-dependent carboxylate-amine ligase which exhibits weak glutamate--cysteine ligase activity. This is Putative glutamate--cysteine ligase 2 from Laribacter hongkongensis (strain HLHK9).